The following is a 291-amino-acid chain: MKIAVYGKGGIGKSTTSCNISVALARRGQKVLQIGCDPKHDSTFTLTGFLIPTIIDTLQSKDYHYEDIWPEDVIHKGYGGVDCVEAGGPPAGAGCGGYVVGETVKLLKELNAFYEYDIILFDVLGDVVCGGFAAPLNYADYCVIITDNGFDALFAANRITASIREKARTHPLRLAGLVGNRTSRRDLINKYVEACPMPVIEVLPIIEDIRVSRVKGKTLFEMVGFEPSLNYVCNYYLGIADQILSQPEGIVPKEIPDRELFSLLSDLYLNPIGGGGQKKNNKENLLGFTRI.

Residues 10–15 and lysine 39 each bind ATP; that span reads GIGKST. Serine 14 lines the Mg(2+) pocket. Residues cysteine 95 and cysteine 129 each contribute to the [4Fe-4S] cluster site. 180–181 lines the ATP pocket; that stretch reads NR.

Belongs to the NifH/BchL/ChlL family. Homodimer. Protochlorophyllide reductase is composed of three subunits; ChlL, ChlN and ChlB. [4Fe-4S] cluster serves as cofactor.

The protein resides in the plastid. It is found in the chloroplast. The catalysed reaction is chlorophyllide a + oxidized 2[4Fe-4S]-[ferredoxin] + 2 ADP + 2 phosphate = protochlorophyllide a + reduced 2[4Fe-4S]-[ferredoxin] + 2 ATP + 2 H2O. The protein operates within porphyrin-containing compound metabolism; chlorophyll biosynthesis (light-independent). Functionally, component of the dark-operative protochlorophyllide reductase (DPOR) that uses Mg-ATP and reduced ferredoxin to reduce ring D of protochlorophyllide (Pchlide) to form chlorophyllide a (Chlide). This reaction is light-independent. The L component serves as a unique electron donor to the NB-component of the complex, and binds Mg-ATP. This chain is Light-independent protochlorophyllide reductase iron-sulfur ATP-binding protein, found in Pinus thunbergii (Japanese black pine).